The primary structure comprises 643 residues: MPDRLVSATLALRDDGTLVSPEFGELHRGASGTLARAHRTFVAGNGLPARWQRRRTFTIVTTAFGAGAGFLAAWVAWRDDPARCERLHVVAVEPHPFSRDDLHRAVSHMVVDTTISADVDALLDAWPILVPGLHRLEFDEGRVVLTLAFGDTIDLLKKLVARADAFFLDGAAASGDGIRALAKLAGEHATFATHAKSDDVKHALGETGFTFREVDDRLVGDYAPRWRARRHEPPRALPVAARRAIVIGAGLAGCAVVERLAARGWDVTLIERHERIASEASGNPAGVFHPLMTRDDNVASRLTRGGFLHALARWRALERAGHAFSRSTHGMLHLAESADDFARMRDAFDAFGPPSDYATLLDADAARAHLNLPVAQGGLLFPHGGAVWPAGLCVAQYAAAGERVRLLASTCVARLERRDDTWHALDDTGATLADAPVVVLANAGDAARLAGLRHVTLQPVRGQLTLLPPGTTAPLPCPAIGDGYAVPLDDGTLLIGATFEPDDTDPAMRAAGHAENLDRVRHLLPGLIGALPDPATLRGRVAFRWVVGDRLPLIGPLADETQATANARALGGAQARDLPRMPGLYGAFGFGSRGLVWAALGAELIASQLEGEPWPLERELADAVDPARFLIRALRARRVGSAG.

Positions 1 to 223 are tRNA (mnm(5)s(2)U34)-methyltransferase; that stretch reads MPDRLVSATL…VDDRLVGDYA (223 aa). The interval 247 to 643 is FAD-dependent cmnm(5)s(2)U34 oxidoreductase; it reads IGAGLAGCAV…LRARRVGSAG (397 aa).

The protein in the N-terminal section; belongs to the methyltransferase superfamily. tRNA (mnm(5)s(2)U34)-methyltransferase family. In the C-terminal section; belongs to the DAO family. FAD serves as cofactor.

Its subcellular location is the cytoplasm. It catalyses the reaction 5-aminomethyl-2-thiouridine(34) in tRNA + S-adenosyl-L-methionine = 5-methylaminomethyl-2-thiouridine(34) in tRNA + S-adenosyl-L-homocysteine + H(+). Functionally, catalyzes the last two steps in the biosynthesis of 5-methylaminomethyl-2-thiouridine (mnm(5)s(2)U) at the wobble position (U34) in tRNA. Catalyzes the FAD-dependent demodification of cmnm(5)s(2)U34 to nm(5)s(2)U34, followed by the transfer of a methyl group from S-adenosyl-L-methionine to nm(5)s(2)U34, to form mnm(5)s(2)U34. The protein is tRNA 5-methylaminomethyl-2-thiouridine biosynthesis bifunctional protein MnmC of Burkholderia orbicola (strain AU 1054).